A 634-amino-acid polypeptide reads, in one-letter code: Alpha-L-iduronidase (634 aa).

An N-terminal signal peptide occupies residues 1–16 (MLTFFAAFLAAPLALA). 3 residues coordinate alpha-D-mannopyranose: P44, L46, and H48. Position 81 (H81) interacts with alpha-L-iduronate. Residue N100 is glycosylated (N-linked (GlcNAc...) asparagine). The alpha-L-iduronate site is built by N171 and E172. The active-site Proton donor is the E172. 2 N-linked (GlcNAc...) asparagine glycosylation sites follow: N180 and N233. 3 residues coordinate alpha-L-iduronate: K254, E289, and G295. Catalysis depends on E289, which acts as the Nucleophile. Position 296 (W296) interacts with alpha-D-mannopyranose. N-linked (GlcNAc...) asparagine glycosylation is present at N326. Residues D339 and R353 each contribute to the alpha-L-iduronate site. Residues N362, N405, and N441 are each glycosylated (N-linked (GlcNAc...) asparagine). C531 and C567 are disulfide-bonded.

This sequence belongs to the glycosyl hydrolase 39 family. Monomer. Post-translationally, N-glycosylation contributes to substrate binding and is required for full enzymatic activity. As to expression, ubiquitous.

It is found in the lysosome. The enzyme catalyses Hydrolysis of unsulfated alpha-L-iduronosidic linkages in dermatan sulfate.. The sequence is that of Alpha-L-iduronidase (Idua) from Mus musculus (Mouse).